A 119-amino-acid chain; its full sequence is MPRVKRGVTAHARHKKILDLAKGYRGRRKNVYRVAKEAVMKAGQYAYRDRRQKKREFRALWIARINAAARECGLSYSVFMNGLKKAEIEVDRKVLADLAVFDKPAFAKIAEQAKASLAI.

The protein belongs to the bacterial ribosomal protein bL20 family.

Functionally, binds directly to 23S ribosomal RNA and is necessary for the in vitro assembly process of the 50S ribosomal subunit. It is not involved in the protein synthesizing functions of that subunit. The protein is Large ribosomal subunit protein bL20 of Nitrosospira multiformis (strain ATCC 25196 / NCIMB 11849 / C 71).